The following is a 514-amino-acid chain: 2-isopropylmalate synthase (514 aa).

The region spanning 5–268 is the Pyruvate carboxyltransferase domain; it reads LIIFDTTLRD…DVGIDTTQIV (264 aa). Residues D14, H202, H204, and N239 each contribute to the Mn(2+) site. Positions 395–514 are regulatory domain; that stretch reads KFVSLSQHSE…KDDKLNPQRA (120 aa).

The protein belongs to the alpha-IPM synthase/homocitrate synthase family. LeuA type 1 subfamily. Homodimer. Mn(2+) serves as cofactor.

Its subcellular location is the cytoplasm. It carries out the reaction 3-methyl-2-oxobutanoate + acetyl-CoA + H2O = (2S)-2-isopropylmalate + CoA + H(+). Its pathway is amino-acid biosynthesis; L-leucine biosynthesis; L-leucine from 3-methyl-2-oxobutanoate: step 1/4. Catalyzes the condensation of the acetyl group of acetyl-CoA with 3-methyl-2-oxobutanoate (2-ketoisovalerate) to form 3-carboxy-3-hydroxy-4-methylpentanoate (2-isopropylmalate). This Burkholderia vietnamiensis (strain G4 / LMG 22486) (Burkholderia cepacia (strain R1808)) protein is 2-isopropylmalate synthase.